The primary structure comprises 515 residues: UBP3-associated protein BRE5 (515 aa).

In terms of domain architecture, NTF2 spans 8-140; that stretch reads ICFAFLQNYY…FDITNDIIRF (133 aa). The span at 157-166 shows a compositional bias: low complexity; sequence QSNEENSVSA. Disordered regions lie at residues 157–410 and 485–515; these read QSNE…PVFS and KTVKKPTSNNPPGIFTNGTRSHRKQPLKRKD. Residues 168–201 are compositionally biased toward basic and acidic residues; it reads EEDKIRHESGVEKEKEKEKSPEISKPKAKKETVK. S187 bears the Phosphoserine mark. Residues 202-213 are compositionally biased toward polar residues; sequence DTTAPTESSTQE. 2 stretches are compositionally biased toward basic and acidic residues: residues 262-282 and 299-319; these read LNEKSHKAEKKAAPIKTKEGS and EVSDEKPVPGGVKEAETEIKP. S282 is modified (phosphoserine). A compositionally biased stretch (polar residues) spans 330 to 341; that stretch reads SGNNASTPSSSP. The residue at position 336 (T336) is a Phosphothreonine. The residue at position 340 (S340) is a Phosphoserine. The span at 374-396 shows a compositional bias: basic and acidic residues; that stretch reads IRPETLPKKPTERKFEMGNRRDN. S398 is subject to Phosphoserine. In terms of domain architecture, RRM spans 418–494; that stretch reads YPIYIRGTNG…KTVKKPTSNN (77 aa). Residues 489-503 show a composition bias toward polar residues; sequence KPTSNNPPGIFTNGT. Residues 504–515 show a composition bias toward basic residues; the sequence is RSHRKQPLKRKD.

As to quaternary structure, heterotetramer with UBP3; contains two molecules of BRE5 and two molecules of UBP3. Forms a complex composed of CDC48, DOA1, deubiquitinase UBP3 and probably BRE5. Within the complex, interacts (via C-terminus) with CDC48; the interaction is direct and UBP3-independent.

Has a role in de-ubiquitination. In conjunction with UBP3, cleaves ubiquitin, leading to the subsequent mono-ubiquitination of sec23. The sequence is that of UBP3-associated protein BRE5 (BRE5) from Saccharomyces cerevisiae (strain ATCC 204508 / S288c) (Baker's yeast).